The chain runs to 546 residues: CTP synthase (546 aa).

Positions 1 to 266 (MTTNYIFVTG…DDLVCQRFGI (266 aa)) are amidoligase domain. Position 14 (serine 14) interacts with CTP. A UTP-binding site is contributed by serine 14. ATP contacts are provided by residues 15–20 (SLGKGI) and aspartate 72. Mg(2+) contacts are provided by aspartate 72 and glutamate 140. CTP-binding positions include 147–149 (DIE), 187–192 (KTKPTQ), and lysine 223. Residues 187-192 (KTKPTQ) and lysine 223 each bind UTP. 239-241 (KDV) contributes to the ATP binding site. Residues 291–542 (TIGMVGKYIE…VKAAGENARG (252 aa)) enclose the Glutamine amidotransferase type-1 domain. Glycine 352 provides a ligand contact to L-glutamine. Cysteine 379 serves as the catalytic Nucleophile; for glutamine hydrolysis. L-glutamine contacts are provided by residues 380–383 (LGMQ), glutamate 403, and arginine 470. Residues histidine 515 and glutamate 517 contribute to the active site.

The protein belongs to the CTP synthase family. As to quaternary structure, homotetramer.

The catalysed reaction is UTP + L-glutamine + ATP + H2O = CTP + L-glutamate + ADP + phosphate + 2 H(+). It carries out the reaction L-glutamine + H2O = L-glutamate + NH4(+). The enzyme catalyses UTP + NH4(+) + ATP = CTP + ADP + phosphate + 2 H(+). Its pathway is pyrimidine metabolism; CTP biosynthesis via de novo pathway; CTP from UDP: step 2/2. Its activity is regulated as follows. Allosterically activated by GTP, when glutamine is the substrate; GTP has no effect on the reaction when ammonia is the substrate. The allosteric effector GTP functions by stabilizing the protein conformation that binds the tetrahedral intermediate(s) formed during glutamine hydrolysis. Inhibited by the product CTP, via allosteric rather than competitive inhibition. Functionally, catalyzes the ATP-dependent amination of UTP to CTP with either L-glutamine or ammonia as the source of nitrogen. Regulates intracellular CTP levels through interactions with the four ribonucleotide triphosphates. This Aliivibrio salmonicida (strain LFI1238) (Vibrio salmonicida (strain LFI1238)) protein is CTP synthase.